Here is a 387-residue protein sequence, read N- to C-terminus: Arrestin-C (387 aa).

It belongs to the arrestin family. Retina and pineal gland.

Functionally, may play a role in an as yet undefined retina-specific signal transduction. Could bind to photoactivated-phosphorylated red/green opsins. The protein is Arrestin-C (arr3) of Xenopus laevis (African clawed frog).